Reading from the N-terminus, the 422-residue chain is Killer cell immunoglobulin-like receptor 3DL1 (422 aa).

An N-terminal signal peptide occupies residues 1–21 (MMFEFLSLLCSGFFLVQRMSA). At 22–329 (HMGSYDKPFL…KNLHIQIGLL (308 aa)) the chain is on the extracellular side. 3 Ig-like C2-type domains span residues 42-100 (GQNV…HHQY), 135-202 (GENV…YNHS), and 237-300 (EQNM…FKNS). An N-linked (GlcNAc...) asparagine glycan is attached at N44. Residues C49 and C95 are joined by a disulfide bond. A glycan (N-linked (GlcNAc...) asparagine) is linked at N137. C142 and C195 are oxidised to a cystine. N200 and N239 each carry an N-linked (GlcNAc...) asparagine glycan. The cysteines at positions 244 and 293 are disulfide-linked. N-linked (GlcNAc...) asparagine glycosylation occurs at N299. A helical transmembrane segment spans residues 330 to 350 (VTMVLVIVVIIIIIIIIIIII). Topologically, residues 351–422 (YYYYFSKKSS…DTVVYTEVMI (72 aa)) are cytoplasmic.

Belongs to the immunoglobulin superfamily.

The protein localises to the cell membrane. Receptor on natural killer (NK) cells. Inhibits the activity of NK cells thus preventing cell lysis. This is Killer cell immunoglobulin-like receptor 3DL1 (Kir3dl1) from Rattus norvegicus (Rat).